The sequence spans 69 residues: UPF0150 protein Ta0767 (69 aa).

Belongs to the UPF0150 family.

In Thermoplasma acidophilum (strain ATCC 25905 / DSM 1728 / JCM 9062 / NBRC 15155 / AMRC-C165), this protein is UPF0150 protein Ta0767.